We begin with the raw amino-acid sequence, 248 residues long: Small ribosomal subunit protein uS2 (248 aa).

The protein belongs to the universal ribosomal protein uS2 family.

The polypeptide is Small ribosomal subunit protein uS2 (Leptothrix cholodnii (strain ATCC 51168 / LMG 8142 / SP-6) (Leptothrix discophora (strain SP-6))).